The primary structure comprises 324 residues: Beta-ketoacyl-[acyl-carrier-protein] synthase III (324 aa).

Active-site residues include C113 and H251. The interval 252 to 256 (QANKR) is ACP-binding. Residue N281 is part of the active site.

The protein belongs to the thiolase-like superfamily. FabH family. In terms of assembly, homodimer.

Its subcellular location is the cytoplasm. The enzyme catalyses malonyl-[ACP] + acetyl-CoA + H(+) = 3-oxobutanoyl-[ACP] + CO2 + CoA. Its pathway is lipid metabolism; fatty acid biosynthesis. Functionally, catalyzes the condensation reaction of fatty acid synthesis by the addition to an acyl acceptor of two carbons from malonyl-ACP. Catalyzes the first condensation reaction which initiates fatty acid synthesis and may therefore play a role in governing the total rate of fatty acid production. Possesses both acetoacetyl-ACP synthase and acetyl transacylase activities. Its substrate specificity determines the biosynthesis of branched-chain and/or straight-chain of fatty acids. In Bartonella bacilliformis (strain ATCC 35685 / KC583 / Herrer 020/F12,63), this protein is Beta-ketoacyl-[acyl-carrier-protein] synthase III.